The chain runs to 154 residues: MSTFVQKPAEVEKKWVIIDAEGLVVGRLATVIATYLRGKHKVTYTPHVDDGDNVIVINAEKVVLTGKKYTDKTYYWHTGYPGGIKERTARQIIEGRFPERVLEKAVERMIPRGPLGRRQMKNLRVYAGSAHPHEAQQPVALDVAKLNSKNVRSA.

Belongs to the universal ribosomal protein uL13 family. Part of the 50S ribosomal subunit.

This protein is one of the early assembly proteins of the 50S ribosomal subunit, although it is not seen to bind rRNA by itself. It is important during the early stages of 50S assembly. In Allorhizobium ampelinum (strain ATCC BAA-846 / DSM 112012 / S4) (Agrobacterium vitis (strain S4)), this protein is Large ribosomal subunit protein uL13.